The sequence spans 404 residues: Probable pectate lyase 18 (404 aa).

The first 20 residues, 1-20, serve as a signal peptide directing secretion; it reads MSTLFFTFSLLLLAPLLVIS. N-linked (GlcNAc...) asparagine glycosylation occurs at N37. C159 and C178 are disulfide-bonded. The N-linked (GlcNAc...) asparagine glycan is linked to N191. The Ca(2+) site is built by D200, D202, D224, and D228. The active site involves R280.

It belongs to the polysaccharide lyase 1 family. It depends on Ca(2+) as a cofactor. In terms of tissue distribution, predominantly found in the pistil where it is found in the outer five layers of the strands of transmitting tissue within the upper two-thirds of the style. Found at much lower levels in the anthers and vegetative organs.

The protein resides in the secreted. It carries out the reaction Eliminative cleavage of (1-&gt;4)-alpha-D-galacturonan to give oligosaccharides with 4-deoxy-alpha-D-galact-4-enuronosyl groups at their non-reducing ends.. The protein operates within glycan metabolism; pectin degradation; 2-dehydro-3-deoxy-D-gluconate from pectin: step 2/5. Its function is as follows. May have a role in the development of the transmitting tissue of the style and/or in the events related to pollination such as some aspect in the facilitation of compatible pollen tube growth. This Solanum lycopersicum (Tomato) protein is Probable pectate lyase 18.